A 502-amino-acid chain; its full sequence is Protein GIS3 (502 aa).

It is found in the cytoplasm. The protein localises to the nucleus. The chain is Protein GIS3 (GIS3) from Saccharomyces cerevisiae (strain ATCC 204508 / S288c) (Baker's yeast).